Reading from the N-terminus, the 214-residue chain is Adenylate kinase (214 aa).

Residue 10–15 participates in ATP binding; that stretch reads GAGKGT. The tract at residues 30–59 is NMP; that stretch reads STGDMLRAAIKAGTELGLEAKRVMDEGKLV. AMP contacts are provided by residues Thr31, Arg36, 57–59, 85–88, and Gln92; these read KLV and GFPR. The segment at 122–159 is LID; it reads GRRVHPASGRVYHVVYNPPKVEGKDNETGDDLIVRDDD. ATP contacts are provided by residues Arg123 and 132–133; that span reads VY. AMP-binding residues include Arg156 and Arg167. Arg200 is an ATP binding site.

Belongs to the adenylate kinase family. As to quaternary structure, monomer.

It is found in the cytoplasm. The catalysed reaction is AMP + ATP = 2 ADP. It functions in the pathway purine metabolism; AMP biosynthesis via salvage pathway; AMP from ADP: step 1/1. Its function is as follows. Catalyzes the reversible transfer of the terminal phosphate group between ATP and AMP. Plays an important role in cellular energy homeostasis and in adenine nucleotide metabolism. The sequence is that of Adenylate kinase from Alteromonas mediterranea (strain DSM 17117 / CIP 110805 / LMG 28347 / Deep ecotype).